A 369-amino-acid polypeptide reads, in one-letter code: 4-hydroxy-3-methylbut-2-en-1-yl diphosphate synthase (flavodoxin) (369 aa).

[4Fe-4S] cluster is bound by residues C270, C273, C305, and E312.

Belongs to the IspG family. The cofactor is [4Fe-4S] cluster.

It carries out the reaction (2E)-4-hydroxy-3-methylbut-2-enyl diphosphate + oxidized [flavodoxin] + H2O + 2 H(+) = 2-C-methyl-D-erythritol 2,4-cyclic diphosphate + reduced [flavodoxin]. Its pathway is isoprenoid biosynthesis; isopentenyl diphosphate biosynthesis via DXP pathway; isopentenyl diphosphate from 1-deoxy-D-xylulose 5-phosphate: step 5/6. Functionally, converts 2C-methyl-D-erythritol 2,4-cyclodiphosphate (ME-2,4cPP) into 1-hydroxy-2-methyl-2-(E)-butenyl 4-diphosphate. The polypeptide is 4-hydroxy-3-methylbut-2-en-1-yl diphosphate synthase (flavodoxin) (Pseudomonas entomophila (strain L48)).